A 975-amino-acid polypeptide reads, in one-letter code: MEDYEQELCGVEDDFHNQFAAELEVLAELEGASTPSPSGVPLFTAGRPPRTFEEALARGDAASSPAPAASVGSSQGGARKRQVDADLQPAGSLPHAPRIKRPRLQVVKRLNFRSEEMEEPPPPDSSPTDITPPPSPEDLAELWGHGVSEAAADVGLTRASPAARNPVLRRPPILEDYVHVTSTEGVRAYLVLRADPMAPGVQGSLLHVPWRGGGQLDLLGVSLASLKKQVDGERRERLLQEAQKLSDTLHSLRSGEEEAAQPLGAPEEEPTDGQDASSHCLWVDEFAPRHYTELLSDDFTNRCLLKWLKLWDLVVFGHERPSRKPRPSVEPARVSKEATAPGKWKSHEQVLEEMLEAGLDPSQRPKQKVALLCGPPGLGKTTLAHVIARHAGYSVVEMNASDDRSPEVFRTRIEAATQMESVLGAGGKPNCLVIDEIDGAPVAAINVLLSILNRKGPQEVGPQGPAVPSGGGRRRRAEGGLLMRPIICICNDQFAPSLRQLKQQAFLLHFPPTLPSRLVQRLQEVSLRQGMRADPGVLAALCEKTDNDIRACINTLQFLYSRGQRELSVRDVQATRVGLKDQRRGLFSVWQEVFQLPRAQRRRVGQDPALPADTLLLGDGDAGSLTSASQRFYRVLHAAASAGEHEKVVQGLFDNFLRLRLRDSSLGAVCVALDWLAFDDLLAGAAHHSQSFQLLRYPPFLPVAFHVLFASSHTPRITFPSSQQEAQNRMSQMRNLIQTLVSGIAPATRSRATPQALLLDALCLLLDILAPKLRPVSTQLYSTREKQQLASLVGTMLAYSLTYRQERTPDGQYIYRLEPNVEELCRFPELPARKPLTYQTKQLIAREIEVEKMRRAEASARVENSPQVDGSPPGLEGLLGGIGEKGVHRPAPRNHEQRLEHIMRRAAREEQPEKDFFGRVVVRSTAVPSAGDTAPEQDSVERRMGTAVGRSEVWFRFNEGVSNAVRRSLYIRDLL.

Disordered regions lie at residues 30 to 83 and 114 to 141; these read EGAS…KRQV and SEEM…DLAE. The residue at position 51 (T51) is a Phosphothreonine. Positions 58-77 are enriched in low complexity; that stretch reads RGDAASSPAPAASVGSSQGG. Residue S64 is modified to Phosphoserine. Over residues 122–136 the composition is skewed to pro residues; sequence PPDSSPTDITPPPSP. The residue at position 225 (S225) is a Phosphoserine. Disordered stretches follow at residues 246-276 and 320-346; these read SDTL…GQDA and RPSR…KWKS. 374-381 provides a ligand contact to ATP; it reads GPPGLGKT. Positions 858–896 are disordered; sequence ASARVENSPQVDGSPPGLEGLLGGIGEKGVHRPAPRNHE. Residue S871 is modified to Phosphoserine.

Belongs to the activator 1 small subunits family. CTF18 subfamily. Component of the CTF18-RFC complex, which consists of CTF18, CTF8, DCC1, RFC2, RFC3, RFC4 and RFC5. During assembly of the CTF18-RFC complex, CTF18 may first assemble into a subcomplex with RFC2, RFC3, RFC4 and RFC5. CTF18 then interacts directly with CTF8, which in turn interacts with DCC1. The CTF18-RFC complex associates with PCNA and with DNA polymerase POLH. The CTF18-RFC complex does not interact with the Rad9/Rad1/Hus1 complex. CTF18 interacts with SMC1A and RAD21. Interacts with DDX11.

It localises to the nucleus. In terms of biological role, chromosome cohesion factor involved in sister chromatid cohesion and fidelity of chromosome transmission. Component of one of the cell nuclear antigen loader complexes, CTF18-replication factor C (CTF18-RFC), which consists of CTF18, CTF8, DCC1, RFC2, RFC3, RFC4 and RFC5. The CTF18-RFC complex binds to single-stranded and primed DNAs and has weak ATPase activity that is stimulated by the presence of primed DNA, replication protein A (RPA) and by proliferating cell nuclear antigen (PCNA). The CTF18-RFC complex catalyzes the ATP-dependent loading of PCNA onto primed and gapped DNA. Interacts with and stimulates DNA polymerase POLH. During DNA repair synthesis, involved in loading DNA polymerase POLE at the sites of local damage. The sequence is that of Chromosome transmission fidelity protein 18 homolog (CHTF18) from Homo sapiens (Human).